Consider the following 85-residue polypeptide: Large ribosomal subunit protein bL27 (85 aa).

Residues 1–20 form a disordered region; sequence MAHKKAGGSTRNGRDSEAKR.

The protein belongs to the bacterial ribosomal protein bL27 family.

In Escherichia coli O139:H28 (strain E24377A / ETEC), this protein is Large ribosomal subunit protein bL27.